The primary structure comprises 456 residues: Tyrosinase-like protein (456 aa).

An N-terminal signal peptide occupies residues 1–22 (MNTMTLLGKVFLLQFLIGVGFC). The Cu cation site is built by His145, His154, His163, His295, His299, and His322.

It belongs to the tyrosinase family. The cofactor is Cu(2+). Prismatic layer of shell (at protein level).

It localises to the secreted. The sequence is that of Tyrosinase-like protein from Pinctada maxima (Silver-lipped pearl oyster).